We begin with the raw amino-acid sequence, 357 residues long: UPF0283 membrane protein BAbS19_I09770 (357 aa).

Positions Met1 to Lys36 are disordered. Positions Glu27–Lys36 are enriched in basic and acidic residues. The next 2 helical transmembrane spans lie at Ile78–Leu98 and Leu109–Leu129.

The protein belongs to the UPF0283 family.

The protein resides in the cell inner membrane. The sequence is that of UPF0283 membrane protein BAbS19_I09770 from Brucella abortus (strain S19).